The following is a 213-amino-acid chain: Ribosomal RNA small subunit methyltransferase G (213 aa).

Residues glycine 75, phenylalanine 80, 128–129 (IE), and arginine 144 contribute to the S-adenosyl-L-methionine site.

The protein belongs to the methyltransferase superfamily. RNA methyltransferase RsmG family.

Its subcellular location is the cytoplasm. It carries out the reaction guanosine(527) in 16S rRNA + S-adenosyl-L-methionine = N(7)-methylguanosine(527) in 16S rRNA + S-adenosyl-L-homocysteine. In terms of biological role, specifically methylates the N7 position of guanine in position 527 of 16S rRNA. In Brucella anthropi (strain ATCC 49188 / DSM 6882 / CCUG 24695 / JCM 21032 / LMG 3331 / NBRC 15819 / NCTC 12168 / Alc 37) (Ochrobactrum anthropi), this protein is Ribosomal RNA small subunit methyltransferase G.